The following is a 750-amino-acid chain: Photosystem I P700 chlorophyll a apoprotein A1 (750 aa).

Transmembrane regions (helical) follow at residues 70–93 (IFSAHFGQLSIIFLWLSGMYFHGA), 156–179 (LYCTAIGGLVFAALMLFAGWFHYH), 195–219 (LNHHLAGLLGLGSLSWAGHQVHVSL), 291–309 (IAHHHLAIAILFLIAGHMY), 346–369 (WHAQLSINLAMLGSLTIIVAHHMY), 385–411 (LSLFTHHMWIGGFLIVGAAAHAAIFMV), 433–455 (AIISHLNWVCIFLGFHSFGLYIH), and 531–549 (FLVHHIHAFTIHVTVLILL). The [4Fe-4S] cluster site is built by C573 and C582. 2 helical membrane passes run 589-610 (HVFLGLFWMYNAISVVIFHFSW) and 664-686 (LSAYGLFFLGAHFVWAFSLMFLF). Residue H675 coordinates chlorophyll a'. Residues M683 and Y691 each coordinate chlorophyll a. W692 is a phylloquinone binding site. A helical membrane pass occupies residues 724–744 (AVGVTHYLLGGIATTWAFFLA).

The protein belongs to the PsaA/PsaB family. In terms of assembly, the PsaA/B heterodimer binds the P700 chlorophyll special pair and subsequent electron acceptors. PSI consists of a core antenna complex that captures photons, and an electron transfer chain that converts photonic excitation into a charge separation. The eukaryotic PSI reaction center is composed of at least 11 subunits. The cofactor is P700 is a chlorophyll a/chlorophyll a' dimer, A0 is one or more chlorophyll a, A1 is one or both phylloquinones and FX is a shared 4Fe-4S iron-sulfur center..

The protein resides in the plastid. Its subcellular location is the chloroplast thylakoid membrane. The enzyme catalyses reduced [plastocyanin] + hnu + oxidized [2Fe-2S]-[ferredoxin] = oxidized [plastocyanin] + reduced [2Fe-2S]-[ferredoxin]. Functionally, psaA and PsaB bind P700, the primary electron donor of photosystem I (PSI), as well as the electron acceptors A0, A1 and FX. PSI is a plastocyanin-ferredoxin oxidoreductase, converting photonic excitation into a charge separation, which transfers an electron from the donor P700 chlorophyll pair to the spectroscopically characterized acceptors A0, A1, FX, FA and FB in turn. Oxidized P700 is reduced on the lumenal side of the thylakoid membrane by plastocyanin. The protein is Photosystem I P700 chlorophyll a apoprotein A1 of Lotus japonicus (Lotus corniculatus var. japonicus).